A 437-amino-acid polypeptide reads, in one-letter code: Serine hydroxymethyltransferase (437 aa).

Residues leucine 130 and 134–136 contribute to the (6S)-5,6,7,8-tetrahydrofolate site; that span reads GHL. Lysine 239 is modified (N6-(pyridoxal phosphate)lysine). 363–365 is a (6S)-5,6,7,8-tetrahydrofolate binding site; sequence TPF.

Belongs to the SHMT family. Homodimer. Requires pyridoxal 5'-phosphate as cofactor.

Its subcellular location is the cytoplasm. The enzyme catalyses (6R)-5,10-methylene-5,6,7,8-tetrahydrofolate + glycine + H2O = (6S)-5,6,7,8-tetrahydrofolate + L-serine. The protein operates within one-carbon metabolism; tetrahydrofolate interconversion. It participates in amino-acid biosynthesis; glycine biosynthesis; glycine from L-serine: step 1/1. Catalyzes the reversible interconversion of serine and glycine with tetrahydrofolate (THF) serving as the one-carbon carrier. This reaction serves as the major source of one-carbon groups required for the biosynthesis of purines, thymidylate, methionine, and other important biomolecules. Also exhibits THF-independent aldolase activity toward beta-hydroxyamino acids, producing glycine and aldehydes, via a retro-aldol mechanism. The protein is Serine hydroxymethyltransferase of Bartonella henselae (strain ATCC 49882 / DSM 28221 / CCUG 30454 / Houston 1) (Rochalimaea henselae).